The sequence spans 164 residues: Transcription antitermination protein NusB (164 aa).

Belongs to the NusB family.

Functionally, involved in transcription antitermination. Required for transcription of ribosomal RNA (rRNA) genes. Binds specifically to the boxA antiterminator sequence of the ribosomal RNA (rrn) operons. The sequence is that of Transcription antitermination protein NusB from Chlamydia muridarum (strain MoPn / Nigg).